Here is a 688-residue protein sequence, read N- to C-terminus: MDFITITSSNKTEEFALKQVAKQATSSLMYRLGKTIILASVCVEREPVGEDFLPLVVQFLEKSYAAGKIPGGFVKREGRAQDFEILTSRLIDRTLRPLFPKDYRYPTQITLMVLSHDVENDLQVSALNAASAALFLSHIAPIKSVSACRIARIGNEFIINPNTSLLNQSSLDLFVSGTKESLNMIEMRSLGQQLNALEEPLMLKALELAQKSLKETCTLYEEIFTPHQNELLFKESQGIIFNERLLDLLKNQYFDEIIKGIESSALSERENVFNEIARKISEAHSEFSLKEIELSLEKVKKTEIRCMIIKDKIRPDKRALEEVRPILIESDLLPMAHSSILFTRGQTQSLVVGVLGTDNDAQTHESLEHKAPIKERFMFHYNFPPFCVGEASSIGATSRRELGHGNLAKRALETSIKNKDQVIRLVSEILESNGSSSMASVCAGSLALYASGVEIYDLIAGVAMGMVSEGQDHAILSDISGLEDAEGDMDFKIAGNLEGITAMQMDTKMSGIQLEVLYQALLQAKKAREHILKIMHEAKEKIVINFSHLPTTEIFNVAPDKIVEIIGQGGRVIREIVEKFEVKIDLNKPSGEVKIMGNKERVLKTKEFILNYLHSLDQELEQYAIDEVLEAQVKRIVDFGAFLSLPKGGEGLLRKQNMDRCQVVLKEGDSIKCRVISFNKGKIALDLA.

Positions 484 and 490 each coordinate Mg(2+). The 60-residue stretch at 550–609 folds into the KH domain; that stretch reads PTTEIFNVAPDKIVEIIGQGGRVIREIVEKFEVKIDLNKPSGEVKIMGNKERVLKTKEFI. Residues 626-688 form the S1 motif domain; that stretch reads DEVLEAQVKR…NKGKIALDLA (63 aa).

This sequence belongs to the polyribonucleotide nucleotidyltransferase family. The cofactor is Mg(2+).

Its subcellular location is the cytoplasm. It carries out the reaction RNA(n+1) + phosphate = RNA(n) + a ribonucleoside 5'-diphosphate. Involved in mRNA degradation. Catalyzes the phosphorolysis of single-stranded polyribonucleotides processively in the 3'- to 5'-direction. This is Polyribonucleotide nucleotidyltransferase from Helicobacter pylori (strain Shi470).